We begin with the raw amino-acid sequence, 326 residues long: Holliday junction branch migration complex subunit RuvB (326 aa).

The tract at residues 1-180 (MKSISCGKEY…FGIPLHLEFY (180 aa)) is large ATPase domain (RuvB-L). Residues I19, R20, G61, K64, T65, T66, 127 to 129 (EDF), R170, Y180, and R217 each bind ATP. T65 is a Mg(2+) binding site. Residues 181–251 (SFEELVNIIK…VADSVLLKLG (71 aa)) form a small ATPAse domain (RuvB-S) region. Residues 254-326 (KMGLNKLDMN…QAKEYLSFQH (73 aa)) are head domain (RuvB-H). DNA is bound by residues R307 and R312.

Belongs to the RuvB family. In terms of assembly, homohexamer. Forms an RuvA(8)-RuvB(12)-Holliday junction (HJ) complex. HJ DNA is sandwiched between 2 RuvA tetramers; dsDNA enters through RuvA and exits via RuvB. An RuvB hexamer assembles on each DNA strand where it exits the tetramer. Each RuvB hexamer is contacted by two RuvA subunits (via domain III) on 2 adjacent RuvB subunits; this complex drives branch migration. In the full resolvosome a probable DNA-RuvA(4)-RuvB(12)-RuvC(2) complex forms which resolves the HJ.

The protein localises to the cytoplasm. The catalysed reaction is ATP + H2O = ADP + phosphate + H(+). Its function is as follows. The RuvA-RuvB-RuvC complex processes Holliday junction (HJ) DNA during genetic recombination and DNA repair, while the RuvA-RuvB complex plays an important role in the rescue of blocked DNA replication forks via replication fork reversal (RFR). RuvA specifically binds to HJ cruciform DNA, conferring on it an open structure. The RuvB hexamer acts as an ATP-dependent pump, pulling dsDNA into and through the RuvAB complex. RuvB forms 2 homohexamers on either side of HJ DNA bound by 1 or 2 RuvA tetramers; 4 subunits per hexamer contact DNA at a time. Coordinated motions by a converter formed by DNA-disengaged RuvB subunits stimulates ATP hydrolysis and nucleotide exchange. Immobilization of the converter enables RuvB to convert the ATP-contained energy into a lever motion, pulling 2 nucleotides of DNA out of the RuvA tetramer per ATP hydrolyzed, thus driving DNA branch migration. The RuvB motors rotate together with the DNA substrate, which together with the progressing nucleotide cycle form the mechanistic basis for DNA recombination by continuous HJ branch migration. Branch migration allows RuvC to scan DNA until it finds its consensus sequence, where it cleaves and resolves cruciform DNA. This is Holliday junction branch migration complex subunit RuvB from Wolbachia pipientis wMel.